The sequence spans 457 residues: Phosphoglucosamine mutase (457 aa).

The active-site Phosphoserine intermediate is the Ser-105. Mg(2+) is bound by residues Ser-105, Asp-247, Asp-249, and Asp-251. Ser-105 carries the post-translational modification Phosphoserine.

This sequence belongs to the phosphohexose mutase family. It depends on Mg(2+) as a cofactor. Post-translationally, activated by phosphorylation.

The catalysed reaction is alpha-D-glucosamine 1-phosphate = D-glucosamine 6-phosphate. Its function is as follows. Catalyzes the conversion of glucosamine-6-phosphate to glucosamine-1-phosphate. This chain is Phosphoglucosamine mutase, found in Protochlamydia amoebophila (strain UWE25).